The chain runs to 152 residues: Transcriptional regulator MraZ (152 aa).

SpoVT-AbrB domains follow at residues 5 to 52 (VTSI…PLHE) and 81 to 124 (ATEC…QDKQ).

It belongs to the MraZ family. As to quaternary structure, forms oligomers.

The protein localises to the cytoplasm. The protein resides in the nucleoid. The sequence is that of Transcriptional regulator MraZ from Actinobacillus pleuropneumoniae serotype 3 (strain JL03).